We begin with the raw amino-acid sequence, 305 residues long: Serine/threonine-protein phosphatase 6 catalytic subunit (305 aa).

Residue methionine 1 is modified to N-acetylmethionine. Residues aspartate 53, histidine 55, aspartate 81, and asparagine 113 each coordinate Mn(2+). Histidine 114 serves as the catalytic Proton donor. Mn(2+) contacts are provided by histidine 163 and histidine 237.

It belongs to the PPP phosphatase family. PP-6 (PP-V) subfamily. In terms of assembly, protein phosphatase 6 (PP6) holoenzyme is proposed to be a heterotrimeric complex formed by the catalytic subunit, a SAPS domain-containing subunit (PP6R) and an ankyrin repeat-domain containing regulatory subunit (ARS). Interacts with subunits PPP6R1, PPP6R2 and PPP6R3. Interacts with subunit ANKRD28. Interacts with IGBP1. Interacts with MAP3K7. Interacts with NFKBIE. Interacts with TRIM14 and WRNIP1; these interactions positively regulate the RIG-I signaling pathway. Mn(2+) is required as a cofactor. As to expression, ubiquitously expressed in all tissues tested with strongest expression in lung, spleen, liver, kidney and brain. Weaker expression observed in bladder, pancreas, heart and skeletal muscle.

The protein localises to the mitochondrion. It is found in the cytoplasm. It catalyses the reaction O-phospho-L-seryl-[protein] + H2O = L-seryl-[protein] + phosphate. The catalysed reaction is O-phospho-L-threonyl-[protein] + H2O = L-threonyl-[protein] + phosphate. Functionally, catalytic subunit of protein phosphatase 6 (PP6). PP6 is a component of a signaling pathway regulating cell cycle progression in response to IL2 receptor stimulation. N-terminal domain restricts G1 to S phase progression in cancer cells, in part through control of cyclin D13 During mitosis, regulates spindle positioning. Down-regulates MAP3K7 kinase activation of the IL1 signaling pathway by dephosphorylation of MAP3K7. Acts as a regulator of innate immunity by mediating dephosphorylation CGAS, STING1 and RIGI. Also participates in the innate immune defense against viruses by desphosphorylating RIGI, an essential step that triggers RIGI-mediated signaling activation. Also regulates innate immunity by acting as a negative regulator of the cGAS-STING pathway: mediates dephosphorylation and inactivation of CGAS and STING1. CGAS dephosphorylation at 'Ser-420' impairs its ability to bind GTP, thereby inactivating it. This Mus musculus (Mouse) protein is Serine/threonine-protein phosphatase 6 catalytic subunit.